The following is a 1151-amino-acid chain: Phospholipid-transporting ATPase NEO1 (1151 aa).

Disordered regions lie at residues 1 to 21 and 73 to 95; these read MPNP…NNNQ and LDNF…THPL. Topologically, residues 1–184 are extracellular; sequence MPNPPSFKSH…LSNAKYNAVT (184 aa). The segment covering 12–21 has biased composition (polar residues); the sequence is QNLFNSNNNQ. A required for endosome-to-Golgi sorting region spans residues 51-104; sequence EPLSKHNTVGDRESFEMRTVDDLDNFSNHSSDSHRKSSNTDTHPLMYDNRLSQD. Serine 102 is subject to Phosphoserine. A helical transmembrane segment spans residues 185 to 205; that stretch reads FVPTLLYEQFKFFYNLYFLVV. Over 206–209 the chain is Cytoplasmic; sequence ALSQ. The chain crosses the membrane as a helical span at residues 210 to 230; sequence AVPALRIGYLSSYIVPLAFVL. Over 231-367 the chain is Extracellular; the sequence is TVTMAKEAID…TSNPLSVDNT (137 aa). The chain crosses the membrane as a helical span at residues 368 to 388; the sequence is LWANTVLASSGFCIACVVYTG. The Cytoplasmic segment spans residues 389–416; that stretch reads RDTRQAMNTTTAKVKTGLLELEINSISK. A helical transmembrane segment spans residues 417–437; that stretch reads ILCACVFALSILLVAFAGFHN. Aspartate 438 is a topological domain (extracellular). The helical transmembrane segment at 439–459 threads the bilayer; it reads DWYIDILRYLILFSTIIPVSL. Residues 460 to 947 are Cytoplasmic-facing; sequence RVNLDLAKSV…KLAQFVMHRG (488 aa). Aspartate 503 serves as the catalytic 4-aspartylphosphate intermediate. Positions 503, 504, and 505 each coordinate ATP. A Mg(2+)-binding site is contributed by aspartate 503. Residue threonine 505 participates in Mg(2+) binding. Serine 551 is subject to Phosphoserine. The ATP site is built by glutamate 597, phenylalanine 640, serine 642, lysine 645, lysine 664, arginine 693, threonine 694, threonine 774, glycine 775, aspartate 776, arginine 856, and lysine 862. Aspartate 882 is a Mg(2+) binding site. ATP is bound by residues asparagine 885 and aspartate 886. Aspartate 886 provides a ligand contact to Mg(2+). A helical transmembrane segment spans residues 948–968; sequence LIIAICQAVYSICSLFEPIAL. Residues 969–970 lie on the Extracellular side of the membrane; the sequence is YQ. A helical membrane pass occupies residues 971 to 991; sequence GWLMVGYATCYTMAPVFSLTL. At 992–1020 the chain is on the cytoplasmic side; sequence DHDIEESLTKIYPELYKELTEGKSLSYKT. Residues 1021-1041 traverse the membrane as a helical segment; the sequence is FFVWVLLSLFQGSVIQLFSQA. The Extracellular portion of the chain corresponds to 1042-1052; it reads FTSLLDTDFTR. The helical transmembrane segment at 1053 to 1073 threads the bilayer; the sequence is MVAISFTALVVNELIMVALEI. Residues 1074–1078 lie on the Cytoplasmic side of the membrane; the sequence is YTWNK. A helical membrane pass occupies residues 1079–1099; it reads TMLVTEIATLLFYIVSVPFLG. Over 1100 to 1109 the chain is Extracellular; the sequence is DYFDLGYMTT. Residues 1110–1130 traverse the membrane as a helical segment; that stretch reads VNYYAGLLVILLISIFPVWTA. Residues 1131–1151 are Cytoplasmic-facing; sequence KAIYRRLHPPSYAKVQEFATP. Residues 1131–1151 are required for endosomal targeting; that stretch reads KAIYRRLHPPSYAKVQEFATP.

It belongs to the cation transport ATPase (P-type) (TC 3.A.3) family. Type IV subfamily. In terms of assembly, interacts with MON2. Interacts with ANY1. Functions without a CDC50/LEM3 family accessory subunit. It depends on Mg(2+) as a cofactor.

The protein resides in the endosome membrane. Its subcellular location is the golgi apparatus membrane. It catalyses the reaction ATP + H2O + phospholipidSide 1 = ADP + phosphate + phospholipidSide 2.. The catalysed reaction is a 1,2-diacyl-sn-glycero-3-phospho-L-serine(out) + ATP + H2O = a 1,2-diacyl-sn-glycero-3-phospho-L-serine(in) + ADP + phosphate + H(+). The enzyme catalyses a 1,2-diacyl-sn-glycero-3-phosphoethanolamine(out) + ATP + H2O = a 1,2-diacyl-sn-glycero-3-phosphoethanolamine(in) + ADP + phosphate + H(+). Flippase that catalyzes the hydrolysis of ATP coupled to the transport of lysophosphatidylserine, phosphatidylethanolamine, and phosphatidylserine from the lumenal to the cytosolic leaflet of the Golgi apparatus membrane and ensures the maintenance of asymmetric distribution of phospholipids. Does not appear to transport phosphatidylcholine or sphingomyelin. May be involved in recycling from endosomes by driving the formation of SNX3-dependent recycling tubules. Required for COPI retrograde transport from the Golgi to the endoplasmic reticulum, Golgi-endosome trafficking, and Golgi-dependent protein glycosylation. In Saccharomyces cerevisiae (strain ATCC 204508 / S288c) (Baker's yeast), this protein is Phospholipid-transporting ATPase NEO1.